Consider the following 187-residue polypeptide: Large ribosomal subunit protein eL18A (187 aa).

Phosphoserine occurs at positions 16 and 64. Phosphothreonine is present on residues Thr-87, Thr-89, and Thr-134. Position 136 is a phosphoserine (Ser-136). Residue Thr-138 is modified to Phosphothreonine.

This sequence belongs to the eukaryotic ribosomal protein eL18 family. In terms of assembly, component of the large ribosomal subunit (LSU). Mature yeast ribosomes consist of a small (40S) and a large (60S) subunit. The 40S small subunit contains 1 molecule of ribosomal RNA (18S rRNA) and at least 33 different proteins. The large 60S subunit contains 3 rRNA molecules (25S, 5.8S and 5S rRNA) and at least 46 different proteins. eL18 interacts with NAP1.

It localises to the cytoplasm. Its function is as follows. Component of the ribosome, a large ribonucleoprotein complex responsible for the synthesis of proteins in the cell. The small ribosomal subunit (SSU) binds messenger RNAs (mRNAs) and translates the encoded message by selecting cognate aminoacyl-transfer RNA (tRNA) molecules. The large subunit (LSU) contains the ribosomal catalytic site termed the peptidyl transferase center (PTC), which catalyzes the formation of peptide bonds, thereby polymerizing the amino acids delivered by tRNAs into a polypeptide chain. The nascent polypeptides leave the ribosome through a tunnel in the LSU and interact with protein factors that function in enzymatic processing, targeting, and the membrane insertion of nascent chains at the exit of the ribosomal tunnel. The chain is Large ribosomal subunit protein eL18A (rpl1801) from Schizosaccharomyces pombe (strain 972 / ATCC 24843) (Fission yeast).